The primary structure comprises 387 residues: NifS-like protein (387 aa).

Pyridoxal 5'-phosphate is bound by residues 58–59 (SE) and 184–186 (SIN).

This sequence belongs to the class-V pyridoxal-phosphate-dependent aminotransferase family. NifS/IscS subfamily. Requires pyridoxal 5'-phosphate as cofactor.

It localises to the virion. This is NifS-like protein from African swine fever virus (isolate Tick/South Africa/Pretoriuskop Pr4/1996) (ASFV).